The following is a 1007-amino-acid chain: Calmodulin-binding transcription activator 1 (1007 aa).

Residues 18–144 (MEQLLSEAQH…YLEVKGNRTS (127 aa)) constitute a DNA-binding region (CG-1). A compositionally biased stretch (polar residues) spans 148–164 (KENNSNSVNGTASVNID). The segment at 148–227 (KENNSNSVNG…VHGNRVRESD (80 aa)) is disordered. Residues 165–176 (STASPTSTLSSL) are compositionally biased toward low complexity. A compositionally biased stretch (polar residues) spans 183-202 (GDSQQASSVLRPSPEPQTGN). Positions 233–398 (DVRALDTVGN…TVECETAAAG (166 aa)) are transcription activation. 2 ANK repeats span residues 612-641 (DGQGILHFVAALGYDWAIKPVLAAGVNINF) and 645-674 (NGWSALHWAAFSGREETVAVLVSLGADAGA). IQ domains are found at residues 821–850 (LSCAATHIQKKYRGWKKRKEFLLIRQRIVK) and 844–873 (IRQRIVKIQAHVRGHQVRKQYRTVIWSVGL). The interval 869-891 (WSVGLLEKIILRWRRKGNGLRGF) is calmodulin-binding. The stretch at 915 to 943 (QEDEYDYLKEGRKQTEERLQKALTRVKSM) forms a coiled coil. At serine 942 the chain carries Phosphoserine.

It belongs to the CAMTA family. In terms of tissue distribution, expressed in roots, stems, leaves, pollen and siliques.

The protein localises to the nucleus. Functionally, transcription activator that binds calmodulin in a calcium-dependent manner in vitro. Binds to the DNA consensus sequence 5'-[ACG]CGCG[GTC]-3'. Regulates transcriptional activity in response to calcium signals. Involved in freezing tolerance. Involved in freezing tolerance in association with CAMTA2 and CAMTA3. Contributes together with CAMTA2 and CAMTA3 to the positive regulation of the cold-induced expression of DREB1A/CBF3, DREB1B/CBF1 and DREB1C/CBF2. Involved in drought stress responses by regulating several drought-responsive genes. Involved in auxin signaling and responses to abiotic stresses. Activates the expression of the V-PPase proton pump AVP1 in pollen. The polypeptide is Calmodulin-binding transcription activator 1 (Arabidopsis thaliana (Mouse-ear cress)).